The following is a 461-amino-acid chain: Ribosomal protein uS12 methylthiotransferase RimO (461 aa).

One can recognise an MTTase N-terminal domain in the interval Pro-13–Pro-128. Cys-22, Cys-58, Cys-87, Cys-159, Cys-163, and Cys-166 together coordinate [4Fe-4S] cluster. In terms of domain architecture, Radical SAM core spans Leu-145 to Lys-390. One can recognise a TRAM domain in the interval Ala-393 to Val-461.

It belongs to the methylthiotransferase family. RimO subfamily. [4Fe-4S] cluster serves as cofactor.

The protein resides in the cytoplasm. The catalysed reaction is L-aspartate(89)-[ribosomal protein uS12]-hydrogen + (sulfur carrier)-SH + AH2 + 2 S-adenosyl-L-methionine = 3-methylsulfanyl-L-aspartate(89)-[ribosomal protein uS12]-hydrogen + (sulfur carrier)-H + 5'-deoxyadenosine + L-methionine + A + S-adenosyl-L-homocysteine + 2 H(+). In terms of biological role, catalyzes the methylthiolation of an aspartic acid residue of ribosomal protein uS12. This is Ribosomal protein uS12 methylthiotransferase RimO from Paraburkholderia xenovorans (strain LB400).